The following is a 631-amino-acid chain: Eukaryotic translation initiation factor 3 subunit L (631 aa).

Residues 335 to 526 (TFVSVLIFFI…AETTLLDGER (192 aa)) enclose the PCI domain. Residues 571 to 631 (KSAPLPVRKP…PKSRQARIAA (61 aa)) form a disordered region. Residues 580–612 (PASSSAPAPATTAAPISKSGESAAPAPAEAPAA) show a composition bias toward low complexity.

The protein belongs to the eIF-3 subunit L family. In terms of assembly, component of the eukaryotic translation initiation factor 3 (eIF-3) complex.

The protein localises to the cytoplasm. Its function is as follows. Component of the eukaryotic translation initiation factor 3 (eIF-3) complex, which is involved in protein synthesis of a specialized repertoire of mRNAs and, together with other initiation factors, stimulates binding of mRNA and methionyl-tRNAi to the 40S ribosome. The eIF-3 complex specifically targets and initiates translation of a subset of mRNAs involved in cell proliferation. In Cryptococcus neoformans var. neoformans serotype D (strain B-3501A) (Filobasidiella neoformans), this protein is Eukaryotic translation initiation factor 3 subunit L.